We begin with the raw amino-acid sequence, 407 residues long: Frizzled/smoothened-like sans CRD protein J (407 aa).

An N-terminal signal peptide occupies residues 1–23 (MKFLFSVILVIISFLGISKIVNG). Over 24–89 (QIACPSPFLY…WNSFNKLVKQ (66 aa)) the chain is Extracellular. A glycan (N-linked (GlcNAc...) asparagine) is linked at Asn37. The helical transmembrane segment at 90-110 (MGAVAFTCSAIIMIIYGPLMN) threads the bilayer. Topologically, residues 111–120 (RSFFKFDRHT) are cytoplasmic. Residues 121–141 (ITVFCFALSTFFIGVSDLMFA) form a helical membrane-spanning segment. Residues 142 to 169 (TNDVDMVCPESHRYARQTDKTCATNGVL) are Extracellular-facing. The helical transmembrane segment at 170-190 (FQFGWLGSVMWFAFLSIDGFF) threads the bilayer. Topologically, residues 191–199 (RASGKKMNK) are cytoplasmic. The helical transmembrane segment at 200–220 (IAFAIVLASIWILNIVLSFAP) threads the bilayer. The Extracellular segment spans residues 221–246 (MGGDQYGAYFVGQVNCWILVKNWQYA). A helical transmembrane segment spans residues 247–267 (FFWAELIVSLAIGFVGICLTI). At 268–285 (YSLIRKTSDGNTLKHVTP) the chain is on the cytoplasmic side. A helical transmembrane segment spans residues 286-306 (LILVFLLFCQYLYMIIFYGII). At 307-354 (NEKKDHYQNILAEQVGCIFNNALAKMKVPGIVYAGECTFNETITFSSQ) the chain is on the extracellular side. N-linked (GlcNAc...) asparagine glycosylation occurs at Asn346. Residues 355–375 (YAFLFFVRLLGIEIFAFYLFS) form a helical membrane-spanning segment. Residues 376–407 (KETLLLIKSSYIATMFGLGDKDAYDVELEETD) are Cytoplasmic-facing.

It belongs to the G-protein coupled receptor Fz/Smo family.

The protein localises to the membrane. The chain is Frizzled/smoothened-like sans CRD protein J (fscJ) from Dictyostelium discoideum (Social amoeba).